Reading from the N-terminus, the 124-residue chain is Nascent polypeptide-associated complex protein (124 aa).

In terms of domain architecture, NAC-A/B spans 7–74 (GLNPRKMKQM…PESRERGDSG (68 aa)). The segment at 53 to 124 (AQGQQTYQVV…DLAAAVQKLE (72 aa)) is disordered. Positions 74-93 (GSEDDSETESGGEFSEDDVE) are enriched in acidic residues.

It belongs to the NAC-alpha family. As to quaternary structure, homodimer. Interacts with the ribosome. Binds ribosomal RNA.

Functionally, contacts the emerging nascent chain on the ribosome. This chain is Nascent polypeptide-associated complex protein, found in Natronomonas pharaonis (strain ATCC 35678 / DSM 2160 / CIP 103997 / JCM 8858 / NBRC 14720 / NCIMB 2260 / Gabara) (Halobacterium pharaonis).